The sequence spans 148 residues: MTIIEVKIKKLENFLGNLPEYATEHSAGMDLVAANEQSITIKVGSIQLIPTGIAIALPESFEAQIRPRSGLAVKHGITVANSPGTIDADYRGEIKVLLINLGNKDFIIEKGMRIAQMIIAKYERVLWAETSILTETMRGRGGFGSTGL.

Residues 68-70 (RSG), Asn81, 85-87 (TID), and Lys95 each bind substrate.

Belongs to the dUTPase family. The cofactor is Mg(2+).

The enzyme catalyses dUTP + H2O = dUMP + diphosphate + H(+). The protein operates within pyrimidine metabolism; dUMP biosynthesis; dUMP from dCTP (dUTP route): step 2/2. Functionally, this enzyme is involved in nucleotide metabolism: it produces dUMP, the immediate precursor of thymidine nucleotides and it decreases the intracellular concentration of dUTP so that uracil cannot be incorporated into DNA. In Rickettsia prowazekii (strain Madrid E), this protein is Deoxyuridine 5'-triphosphate nucleotidohydrolase.